The sequence spans 245 residues: MLIIPAIDLKDGACVRLRQGRMDDSTVFSDDPVAMAARWVEAGCRRLHLVDLNGAFEGQPINGEVVTAIARRYPDLPIQIGGGIRSLETIEHYVKAGVGYVIIGTKAVKQPEFVGEACRAFPGKVIVGLDARDGFVATDGWAEVSSVQVVDLARRFEADGVSAIVYTDIAKDGMMQGCNVEATAALAAATRIPVIASGGIHDLGDIRKLLDARAPGIVGAITGRAIYEGTLDVAEAQALCDGFKG.

D8 functions as the Proton acceptor in the catalytic mechanism. Residue D130 is the Proton donor of the active site.

It belongs to the HisA/HisF family.

Its subcellular location is the cytoplasm. The enzyme catalyses 1-(5-phospho-beta-D-ribosyl)-5-[(5-phospho-beta-D-ribosylamino)methylideneamino]imidazole-4-carboxamide = 5-[(5-phospho-1-deoxy-D-ribulos-1-ylimino)methylamino]-1-(5-phospho-beta-D-ribosyl)imidazole-4-carboxamide. The protein operates within amino-acid biosynthesis; L-histidine biosynthesis; L-histidine from 5-phospho-alpha-D-ribose 1-diphosphate: step 4/9. In Azotobacter vinelandii (strain DJ / ATCC BAA-1303), this protein is 1-(5-phosphoribosyl)-5-[(5-phosphoribosylamino)methylideneamino] imidazole-4-carboxamide isomerase.